A 109-amino-acid chain; its full sequence is FK506-binding protein (109 aa).

Residues 20-108 (GKEITVHYTG…IFEVELLKVY (89 aa)) form the PPIase FKBP-type domain.

This sequence belongs to the FKBP-type PPIase family.

It catalyses the reaction [protein]-peptidylproline (omega=180) = [protein]-peptidylproline (omega=0). With respect to regulation, inhibited by FK506. In terms of biological role, PPIases accelerate the folding of proteins. The chain is FK506-binding protein (fbp) from Neisseria meningitidis serogroup A / serotype 4A (strain DSM 15465 / Z2491).